The chain runs to 460 residues: DNA repair protein RadA (460 aa).

Residues 11–28 form a C4-type zinc finger; that stretch reads CNECGADYPRWQGQCSAC. Residue 102–109 participates in ATP binding; sequence GNPGAGKS. The RadA KNRFG motif motif lies at 258–262; the sequence is KNRFG. Residues 357–460 form a lon-protease-like region; the sequence is DVFVNVVGGV…ADALSVFDDL (104 aa).

This sequence belongs to the RecA family. RadA subfamily.

Its function is as follows. DNA-dependent ATPase involved in processing of recombination intermediates, plays a role in repairing DNA breaks. Stimulates the branch migration of RecA-mediated strand transfer reactions, allowing the 3' invading strand to extend heteroduplex DNA faster. Binds ssDNA in the presence of ADP but not other nucleotides, has ATPase activity that is stimulated by ssDNA and various branched DNA structures, but inhibited by SSB. Does not have RecA's homology-searching function. The chain is DNA repair protein RadA from Salmonella typhimurium (strain LT2 / SGSC1412 / ATCC 700720).